Here is a 177-residue protein sequence, read N- to C-terminus: Large ribosomal subunit protein uL6 (177 aa).

This sequence belongs to the universal ribosomal protein uL6 family. In terms of assembly, part of the 50S ribosomal subunit.

This protein binds to the 23S rRNA, and is important in its secondary structure. It is located near the subunit interface in the base of the L7/L12 stalk, and near the tRNA binding site of the peptidyltransferase center. The chain is Large ribosomal subunit protein uL6 from Methylococcus capsulatus (strain ATCC 33009 / NCIMB 11132 / Bath).